Here is a 570-residue protein sequence, read N- to C-terminus: Pre-mRNA 3'-end-processing factor FIP1 (570 aa).

Basic and acidic residues predominate over residues 1–10 (MSAEEADKTT). Residues 1-107 (MSAEEADKTT…SDDDDDDVRV (107 aa)) form a disordered region. Residues 16 to 38 (AGDEEEEWLYGDEGESKETEEEE) show a composition bias toward acidic residues. The segment covering 56–77 (DAPTTTNNSSDSATPPTTTTTT) has biased composition (low complexity). A compositionally biased stretch (acidic residues) spans 87 to 104 (APGEDEDSESDSDDDDDD). Thr-125 bears the Phosphothreonine mark. At Ser-247 the chain carries Phosphoserine. Disordered regions lie at residues 300 to 328 (RRRH…VQKM), 371 to 400 (PNFP…YDGR), and 418 to 570 (GAVN…EAME). The span at 371–384 (PNFPPPTGGPPPSL) shows a compositional bias: pro residues. Composition is skewed to basic and acidic residues over residues 436-462 (YPRR…RDHS) and 476-506 (DEER…EERH). Composition is skewed to basic residues over residues 520–529 (KSSRSSSRRR) and 538–548 (HRRHKHKKSKR). Positions 549-562 (SKEGKEPSEERSAD) are enriched in basic and acidic residues.

The protein belongs to the FIP1 family.

The protein localises to the nucleus. Involved in mRNA processing. The chain is Pre-mRNA 3'-end-processing factor FIP1 (fip1l1) from Danio rerio (Zebrafish).